The following is a 549-amino-acid chain: Protein EPD2 (549 aa).

The N-terminal stretch at 1–20 is a signal peptide; the sequence is MISVIKSLLTLSVLSTLAAA. A glycan (N-linked (GlcNAc...) asparagine) is linked at Asn41. Cysteines 82 and 111 form a disulfide. Residues Asn173 and Asn261 are each glycosylated (N-linked (GlcNAc...) asparagine). 5 disulfide bridges follow: Cys224/Cys358, Cys242/Cys273, Cys381/Cys432, Cys390/Cys456, and Cys409/Cys414. N-linked (GlcNAc...) asparagine glycosylation occurs at Asn467. The disordered stretch occupies residues 470 to 518; that stretch reads ASTSCSAAGGRGLQSGRRSSTTRGGSSSSRSSSSSSSSSTGSGSSNAGI. Residues 484–514 are compositionally biased toward low complexity; it reads SGRRSSTTRGGSSSSRSSSSSSSSSTGSGSS.

The protein belongs to the glycosyl hydrolase 72 family.

It is found in the cell membrane. The polypeptide is Protein EPD2 (EPD2) (Candida maltosa (Yeast)).